The primary structure comprises 189 residues: dCTP deaminase (189 aa).

Residues 112–117 (KSTYAR), 136–138 (TLE), Q157, Y171, and Q181 contribute to the dCTP site. Catalysis depends on E138, which acts as the Proton donor/acceptor.

This sequence belongs to the dCTP deaminase family. As to quaternary structure, homotrimer.

The catalysed reaction is dCTP + H2O + H(+) = dUTP + NH4(+). Its pathway is pyrimidine metabolism; dUMP biosynthesis; dUMP from dCTP (dUTP route): step 1/2. Functionally, catalyzes the deamination of dCTP to dUTP. In Albidiferax ferrireducens (strain ATCC BAA-621 / DSM 15236 / T118) (Rhodoferax ferrireducens), this protein is dCTP deaminase.